The primary structure comprises 584 residues: 2-succinyl-5-enolpyruvyl-6-hydroxy-3-cyclohexene-1-carboxylate synthase (584 aa).

It belongs to the TPP enzyme family. MenD subfamily. Homodimer. Mg(2+) serves as cofactor. The cofactor is Mn(2+). Requires thiamine diphosphate as cofactor.

The enzyme catalyses isochorismate + 2-oxoglutarate + H(+) = 5-enolpyruvoyl-6-hydroxy-2-succinyl-cyclohex-3-ene-1-carboxylate + CO2. It participates in quinol/quinone metabolism; 1,4-dihydroxy-2-naphthoate biosynthesis; 1,4-dihydroxy-2-naphthoate from chorismate: step 2/7. It functions in the pathway quinol/quinone metabolism; menaquinone biosynthesis. Catalyzes the thiamine diphosphate-dependent decarboxylation of 2-oxoglutarate and the subsequent addition of the resulting succinic semialdehyde-thiamine pyrophosphate anion to isochorismate to yield 2-succinyl-5-enolpyruvyl-6-hydroxy-3-cyclohexene-1-carboxylate (SEPHCHC). The sequence is that of 2-succinyl-5-enolpyruvyl-6-hydroxy-3-cyclohexene-1-carboxylate synthase from Bacillus cytotoxicus (strain DSM 22905 / CIP 110041 / 391-98 / NVH 391-98).